Here is a 139-residue protein sequence, read N- to C-terminus: ATP synthase epsilon chain (139 aa).

The protein belongs to the ATPase epsilon chain family. As to quaternary structure, F-type ATPases have 2 components, CF(1) - the catalytic core - and CF(0) - the membrane proton channel. CF(1) has five subunits: alpha(3), beta(3), gamma(1), delta(1), epsilon(1). CF(0) has three main subunits: a, b and c.

The protein resides in the cell inner membrane. Its function is as follows. Produces ATP from ADP in the presence of a proton gradient across the membrane. The protein is ATP synthase epsilon chain of Pseudomonas putida (strain GB-1).